The primary structure comprises 424 residues: Dihydrolipoyllysine-residue succinyltransferase component of 2-oxoglutarate dehydrogenase complex (424 aa).

One can recognise a Lipoyl-binding domain in the interval 1–76; it reads MPEVKVPELA…EVGQAIAVVG (76 aa). Lysine 42 carries the post-translational modification N6-lipoyllysine. Disordered regions lie at residues 76-138 and 155-204; these read GEGS…KYAR and VRKE…RKKT. Over residues 91-105 the composition is skewed to basic and acidic residues; it reads EAPKQETETSTDDKS. A compositionally biased stretch (polar residues) spans 122–131; the sequence is DNNQRVNATP. A Peripheral subunit-binding (PSBD) domain is found at 128–164; that stretch reads NATPSARKYAREKGIDLSEIAAASNDVVRKEHVDQSQ. Low complexity predominate over residues 162–176; sequence QSQTQTSTQQQAQPA. Residues histidine 395 and aspartate 399 contribute to the active site.

Belongs to the 2-oxoacid dehydrogenase family. Forms a 24-polypeptide structural core with octahedral symmetry. Part of the 2-oxoglutarate dehydrogenase (OGDH) complex composed of E1 (2-oxoglutarate dehydrogenase), E2 (dihydrolipoamide succinyltransferase) and E3 (dihydrolipoamide dehydrogenase); the complex contains multiple copies of the three enzymatic components (E1, E2 and E3). Requires (R)-lipoate as cofactor.

The enzyme catalyses N(6)-[(R)-dihydrolipoyl]-L-lysyl-[protein] + succinyl-CoA = N(6)-[(R)-S(8)-succinyldihydrolipoyl]-L-lysyl-[protein] + CoA. It participates in amino-acid degradation; L-lysine degradation via saccharopine pathway; glutaryl-CoA from L-lysine: step 6/6. Functionally, E2 component of the 2-oxoglutarate dehydrogenase (OGDH) complex which catalyzes the second step in the conversion of 2-oxoglutarate to succinyl-CoA and CO(2). The protein is Dihydrolipoyllysine-residue succinyltransferase component of 2-oxoglutarate dehydrogenase complex (odhB) of Staphylococcus saprophyticus subsp. saprophyticus (strain ATCC 15305 / DSM 20229 / NCIMB 8711 / NCTC 7292 / S-41).